The following is a 1894-amino-acid chain: 1,3-beta-glucan synthase component bgs2 (1894 aa).

2 disordered regions span residues 1 to 53 and 282 to 310; these read MSWH…DSNK and GPKI…PETS. The segment covering 32 to 51 has biased composition (polar residues); it reads EFNNPGEESTYPQANSWNDS. Residues 286–296 show a composition bias toward basic residues; that stretch reads KQAKKKQKRKS. The next 16 membrane-spanning stretches (helical) occupy residues 530-550, 566-586, 600-620, 655-675, 710-730, 731-751, 1338-1358, 1394-1414, 1476-1498, 1503-1525, 1598-1618, 1637-1657, 1673-1693, 1697-1717, 1778-1798, and 1837-1857; these read VSLG…FEWI, FLIL…VFGF, VAIV…LVPL, VSWG…YFFL, ILLG…TYLW, YILV…ISIW, IFIM…GGMY, CIIS…VQEL, LLFS…MLLF, VWIP…PFIF, FTEI…YFFI, ILIL…TFAG, FGAV…IIVF, WYLE…IIAI, DFFL…IPFI, and TMFF…LVVA.

It belongs to the glycosyltransferase 48 family. In terms of assembly, component of the 1,3-beta-glucan synthase (GS) complex, composed of at least the alternate catalytic subunits bgs1, bgs2, bgs3, and bgs4, and a regulatory subunit chr4.

The protein resides in the prospore membrane. The enzyme catalyses [(1-&gt;3)-beta-D-glucosyl](n) + UDP-alpha-D-glucose = [(1-&gt;3)-beta-D-glucosyl](n+1) + UDP + H(+). Its function is as follows. Alternate catalytic subunit of the 1,3-beta-glucan synthase (GS) complex. Synthesizes 1,3-beta-glucan, a major structural component of the yeast cell wall. Has a role in ascospore development where it is required for the assembly of a functional spore wall. The polypeptide is 1,3-beta-glucan synthase component bgs2 (Schizosaccharomyces pombe (strain 972 / ATCC 24843) (Fission yeast)).